A 145-amino-acid polypeptide reads, in one-letter code: Large ribosomal subunit protein uL13 (145 aa).

This sequence belongs to the universal ribosomal protein uL13 family. Part of the 50S ribosomal subunit.

Functionally, this protein is one of the early assembly proteins of the 50S ribosomal subunit, although it is not seen to bind rRNA by itself. It is important during the early stages of 50S assembly. The sequence is that of Large ribosomal subunit protein uL13 from Haloquadratum walsbyi (strain DSM 16790 / HBSQ001).